Reading from the N-terminus, the 131-residue chain is Fumarate reductase subunit C (131 aa).

Transmembrane regions (helical) follow at residues 30 to 50, 57 to 77, and 109 to 129; these read EGTA…LFAL, WMGF…LITL, and IIKG…YVAL.

This sequence belongs to the FrdC family. Part of an enzyme complex containing four subunits: a flavoprotein (FrdA), an iron-sulfur protein (FrdB), and two hydrophobic anchor proteins (FrdC and FrdD).

It is found in the cell inner membrane. Two distinct, membrane-bound, FAD-containing enzymes are responsible for the catalysis of fumarate and succinate interconversion; fumarate reductase is used in anaerobic growth, and succinate dehydrogenase is used in aerobic growth. Anchors the catalytic components of the fumarate reductase complex to the cell inner membrane, binds quinones. This is Fumarate reductase subunit C from Salmonella heidelberg (strain SL476).